Reading from the N-terminus, the 273-residue chain is uncharacterized protein (273 aa).

Positions 1–10 (MSSKKVKYNP) are enriched in basic residues. 2 disordered regions span residues 1–32 (MSSKKVKYNPRKSASQNEATSASAGSKAFGFN) and 50–124 (EDVE…QSSP). Composition is skewed to polar residues over residues 12–24 (KSASQNEATSASA), 55–64 (QSFNGKSSNL), and 92–124 (PQSSSQKPFASSTYNVELPTSPTKITNIGQSSP). Serine 123 is modified (phosphoserine).

The protein localises to the nucleus. Its subcellular location is the cytoplasm. The protein resides in the cytoskeleton. It is found in the spindle. This is an uncharacterized protein from Schizosaccharomyces pombe (strain 972 / ATCC 24843) (Fission yeast).